The primary structure comprises 1388 residues: Rho-associated protein kinase 2 (1388 aa).

Residues M1–A24 form a disordered region. In terms of domain architecture, Protein kinase spans Y92 to F354. ATP is bound by residues I98–V106 and K121. D214 serves as the catalytic Proton acceptor. Positions D357 to S425 constitute an AGC-kinase C-terminal domain. The segment at N363–V784 is interaction with PPP1R12A. Residues P373–L420 form an interaction with NPM1 region. Residue T414 is modified to Phosphothreonine; by ROCK2. Coiled coils occupy residues S439–L1024 and S1052–D1131. Positions T497–T573 constitute an REM-1 domain. Positions A513–E530 are enriched in basic and acidic residues. Residues A513–D532 are disordered. Y722 is subject to Phosphotyrosine; by SRC. The RhoBD domain maps to T979–P1047. The tract at residues T979–P1047 is RHOA binding. S1137 carries the phosphoserine modification. Residues E1150–P1349 enclose the PH domain. T1212 carries the post-translational modification Phosphothreonine. The Phorbol-ester/DAG-type zinc finger occupies G1260 to C1315. The disordered stretch occupies residues V1345–S1388. 2 positions are modified to phosphoserine: S1362 and S1374. Positions S1362–R1376 are enriched in polar residues.

This sequence belongs to the protein kinase superfamily. AGC Ser/Thr protein kinase family. In terms of assembly, homodimer. Interacts with IRS1. Interacts with RAF1. Interacts with RHOA (activated by GTP), RHOB, RHOC. Interacts with PPP1R12A. Interacts with EP300. Interacts with CHORDC1. Interacts with BRCA2. Interacts with NPM1; this interaction enhances its activity. Interacts with SORL1. Interacts with PJVK. Requires Mg(2+) as cofactor. Post-translationally, autophosphorylated. Phosphorylation at Tyr-722 reduces its binding to RHOA and is crucial for focal adhesion dynamics. Dephosphorylation by PTPN11 stimulates its RHOA binding activity. Cleaved by granzyme B during apoptosis. This leads to constitutive activation of the kinase and membrane blebbing. Highly expressed in brain, lung, liver, skeletal muscle, kidney and testis.

The protein resides in the cytoplasm. It is found in the cell membrane. The protein localises to the nucleus. Its subcellular location is the cytoskeleton. It localises to the microtubule organizing center. The protein resides in the centrosome. It catalyses the reaction L-seryl-[protein] + ATP = O-phospho-L-seryl-[protein] + ADP + H(+). The enzyme catalyses L-threonyl-[protein] + ATP = O-phospho-L-threonyl-[protein] + ADP + H(+). With respect to regulation, activated by RHOA binding. Inhibited by Y-27632. Its function is as follows. Protein kinase which is a key regulator of actin cytoskeleton and cell polarity. Involved in regulation of smooth muscle contraction, actin cytoskeleton organization, stress fiber and focal adhesion formation, neurite retraction, cell adhesion and motility via phosphorylation of ADD1, BRCA2, CNN1, EZR, DPYSL2, EP300, MSN, MYL9/MLC2, NPM1, RDX, PPP1R12A and VIM. Phosphorylates SORL1 and IRF4. Acts as a negative regulator of VEGF-induced angiogenic endothelial cell activation. Positively regulates the activation of p42/MAPK1-p44/MAPK3 and of p90RSK/RPS6KA1 during myogenic differentiation. Plays an important role in the timely initiation of centrosome duplication. Inhibits keratinocyte terminal differentiation. May regulate closure of the eyelids and ventral body wall through organization of actomyosin bundles. Plays a critical role in the regulation of spine and synaptic properties in the hippocampus. Plays a role in placental homeostasis during the perinatal period. Plays an important role in generating the circadian rhythm of the aortic myofilament Ca(2+) sensitivity and vascular contractility by modulating the myosin light chain phosphorylation. This is Rho-associated protein kinase 2 (Rock2) from Rattus norvegicus (Rat).